A 206-amino-acid chain; its full sequence is 2,3-bisphosphoglycerate-dependent phosphoglycerate mutase (206 aa).

Residues 9–16, 22–23, arginine 61, 88–91, lysine 99, 115–116, and 159–160 each bind substrate; these read RHGQSEWN, TG, ERNY, RR, and GN. Histidine 10 acts as the Tele-phosphohistidine intermediate in catalysis. Glutamate 88 (proton donor/acceptor) is an active-site residue.

The protein belongs to the phosphoglycerate mutase family. BPG-dependent PGAM subfamily. In terms of assembly, homodimer.

The catalysed reaction is (2R)-2-phosphoglycerate = (2R)-3-phosphoglycerate. It participates in carbohydrate degradation; glycolysis; pyruvate from D-glyceraldehyde 3-phosphate: step 3/5. Catalyzes the interconversion of 2-phosphoglycerate and 3-phosphoglycerate. The chain is 2,3-bisphosphoglycerate-dependent phosphoglycerate mutase from Bartonella tribocorum (strain CIP 105476 / IBS 506).